We begin with the raw amino-acid sequence, 204 residues long: High frequency lysogenization protein HflD homolog (204 aa).

It belongs to the HflD family.

The protein resides in the cytoplasm. The protein localises to the cell inner membrane. The polypeptide is High frequency lysogenization protein HflD homolog (Actinobacillus succinogenes (strain ATCC 55618 / DSM 22257 / CCUG 43843 / 130Z)).